The following is a 489-amino-acid chain: Ubiquitin carboxyl-terminal hydrolase 14 (489 aa).

In terms of domain architecture, USP spans 102 to 458 (CGLANLGNTC…SAYVLLYEAR (357 aa)). Residue Cys-111 is the Nucleophile of the active site. His-409 functions as the Proton acceptor in the catalytic mechanism. The tract at residues 467–489 (PPAPVPTEVAADTAEPMEVSEKQ) is disordered.

The protein belongs to the peptidase C19 family. USP14/UBP6 subfamily.

It catalyses the reaction Thiol-dependent hydrolysis of ester, thioester, amide, peptide and isopeptide bonds formed by the C-terminal Gly of ubiquitin (a 76-residue protein attached to proteins as an intracellular targeting signal).. Proteasome-associated deubiquitinase which releases ubiquitin from the proteasome targeted ubiquitinated proteins. Ensures the regeneration of ubiquitin at the proteasome. This Caenorhabditis elegans protein is Ubiquitin carboxyl-terminal hydrolase 14 (usp-14).